The chain runs to 367 residues: Phosphoribosylaminoimidazole-succinocarboxamide synthase (367 aa).

This sequence belongs to the SAICAR synthetase family.

The enzyme catalyses 5-amino-1-(5-phospho-D-ribosyl)imidazole-4-carboxylate + L-aspartate + ATP = (2S)-2-[5-amino-1-(5-phospho-beta-D-ribosyl)imidazole-4-carboxamido]succinate + ADP + phosphate + 2 H(+). Its pathway is purine metabolism; IMP biosynthesis via de novo pathway; 5-amino-1-(5-phospho-D-ribosyl)imidazole-4-carboxamide from 5-amino-1-(5-phospho-D-ribosyl)imidazole-4-carboxylate: step 1/2. The chain is Phosphoribosylaminoimidazole-succinocarboxamide synthase from Vibrio parahaemolyticus serotype O3:K6 (strain RIMD 2210633).